A 272-amino-acid polypeptide reads, in one-letter code: 2-dehydro-3-deoxyphosphooctonate aldolase (272 aa).

This sequence belongs to the KdsA family.

The protein localises to the cytoplasm. It carries out the reaction D-arabinose 5-phosphate + phosphoenolpyruvate + H2O = 3-deoxy-alpha-D-manno-2-octulosonate-8-phosphate + phosphate. It functions in the pathway carbohydrate biosynthesis; 3-deoxy-D-manno-octulosonate biosynthesis; 3-deoxy-D-manno-octulosonate from D-ribulose 5-phosphate: step 2/3. It participates in bacterial outer membrane biogenesis; lipopolysaccharide biosynthesis. This Geobacter metallireducens (strain ATCC 53774 / DSM 7210 / GS-15) protein is 2-dehydro-3-deoxyphosphooctonate aldolase.